The chain runs to 76 residues: UPF0248 protein MmarC7_1289 (76 aa).

Belongs to the UPF0248 family.

The sequence is that of UPF0248 protein MmarC7_1289 from Methanococcus maripaludis (strain C7 / ATCC BAA-1331).